A 228-amino-acid polypeptide reads, in one-letter code: MQKLKQQVFEANMDLPRYGLVTFTWGNVSAIDRERGLVVIKPSGVAYETMKADDMVVVDMSGKVVEGKYRPSSDTATHLELYRRYPSLGGIVHTHSTHATAWAQAGLAIPALGTTHADYFFGDIPCTRGLSEEEVQGEYELNTGKVIIETLGDAEPLHTPGIVVYQHGPFAWGKDAHDAVHNAVVMEEVAKMAWIARSINPQLNHIDSFLMNKHFMRKHGPNAYYGQK.

Substrate is bound by residues 26 to 27 (GN), 43 to 44 (SG), and 72 to 73 (SS). Zn(2+) contacts are provided by aspartate 74, histidine 93, and histidine 95. The active-site Proton donor/acceptor is the aspartate 118. Residue histidine 167 participates in Zn(2+) binding. The active-site Proton donor/acceptor is tyrosine 225.

It belongs to the aldolase class II family. AraD/FucA subfamily. The cofactor is Zn(2+).

The enzyme catalyses L-ribulose 5-phosphate = D-xylulose 5-phosphate. It participates in cofactor degradation; L-ascorbate degradation; D-xylulose 5-phosphate from L-ascorbate: step 4/4. Its function is as follows. Catalyzes the isomerization of L-ribulose 5-phosphate to D-xylulose 5-phosphate. Is involved in the anaerobic L-ascorbate utilization. The protein is Putative L-ribulose-5-phosphate 4-epimerase UlaF of Shigella boydii serotype 4 (strain Sb227).